The following is a 1459-amino-acid chain: Endogenous retrovirus group K member 7 Pol protein (1459 aa).

The region spanning 57–245 (LEKGHIEPSF…TPFHYLGMQI (189 aa)) is the Reverse transcriptase domain. Residues 161–164 (LPQG) carry the LPQG motif. Positions 195-198 (YIDD) match the YXDD motif. The 131-residue stretch at 460 to 590 (LENALTVFTD…ADLLVSSALI (131 aa)) folds into the RNase H type-1 domain. Positions 469, 497, 517, and 582 each coordinate Mg(2+). The segment at 587-628 (SALIKAQELHALTHVNAAGLKNKFDVTWKQAKDIVQHCTQCQ) adopts an Integrase-type zinc-finger fold. Zn(2+)-binding residues include H596, H600, C624, and C627. Residues 642 to 803 (RGLCPNALWQ…TSAEQHLTGK (162 aa)) form the Integrase catalytic domain. Residues 811 to 859 (KLIWWKDNKNKTWEIGKVITWGRGFACVSPGENQLPVWIPTRHLKFYNE) constitute a DNA-binding region (integrase-type).

The protein belongs to the beta type-B retroviral polymerase family. HERV class-II K(HML-2) pol subfamily.

It catalyses the reaction DNA(n) + a 2'-deoxyribonucleoside 5'-triphosphate = DNA(n+1) + diphosphate. It carries out the reaction Endonucleolytic cleavage to 5'-phosphomonoester.. Its function is as follows. Early post-infection, the reverse transcriptase converts the viral RNA genome into double-stranded viral DNA. The RNase H domain of the reverse transcriptase performs two functions. It degrades the RNA template and specifically removes the RNA primer from the RNA/DNA hybrid. Following nuclear import, the integrase catalyzes the insertion of the linear, double-stranded viral DNA into the host cell chromosome. Endogenous Pol proteins may have kept, lost or modified their original function during evolution. The polypeptide is Endogenous retrovirus group K member 7 Pol protein (ERVK-7) (Homo sapiens (Human)).